A 708-amino-acid polypeptide reads, in one-letter code: Exocyst complex component 5 (708 aa).

Ala2 is subject to N-acetylalanine. The stretch at 40-101 forms a coiled coil; sequence KRLLEEFVNH…AFQHFQELDE (62 aa). Residues Thr122, Thr395, and Thr405 each carry the phosphothreonine modification. Ser412 bears the Phosphoserine mark.

Belongs to the SEC10 family. The exocyst complex is composed of EXOC1, EXOC2, EXOC3, EXOC4, EXOC5, EXOC6, EXOC7 and EXOC8. Interacts with EXOC3L1. Ubiquitous.

Its subcellular location is the cytoplasm. It is found in the midbody. Its function is as follows. Component of the exocyst complex involved in the docking of exocytic vesicles with fusion sites on the plasma membrane. The sequence is that of Exocyst complex component 5 (EXOC5) from Homo sapiens (Human).